We begin with the raw amino-acid sequence, 396 residues long: S-adenosylmethionine synthase (396 aa).

Position 16 (H16) interacts with ATP. A Mg(2+)-binding site is contributed by D18. E44 contacts K(+). 2 residues coordinate L-methionine: E57 and Q100. Residues 100–110 (QSVDIAQGVDR) form a flexible loop region. ATP contacts are provided by residues 165-167 (DAK), 231-232 (KF), D240, 246-247 (RK), A263, and K267. L-methionine is bound at residue D240. K271 is an L-methionine binding site.

This sequence belongs to the AdoMet synthase family. Homotetramer; dimer of dimers. Mg(2+) serves as cofactor. K(+) is required as a cofactor.

Its subcellular location is the cytoplasm. The catalysed reaction is L-methionine + ATP + H2O = S-adenosyl-L-methionine + phosphate + diphosphate. The protein operates within amino-acid biosynthesis; S-adenosyl-L-methionine biosynthesis; S-adenosyl-L-methionine from L-methionine: step 1/1. Its function is as follows. Catalyzes the formation of S-adenosylmethionine (AdoMet) from methionine and ATP. The overall synthetic reaction is composed of two sequential steps, AdoMet formation and the subsequent tripolyphosphate hydrolysis which occurs prior to release of AdoMet from the enzyme. The sequence is that of S-adenosylmethionine synthase from Marinobacter nauticus (strain ATCC 700491 / DSM 11845 / VT8) (Marinobacter aquaeolei).